An 815-amino-acid chain; its full sequence is ABC transporter G family member 7 (815 aa).

Disordered stretches follow at residues Asn81–Phe141 and Lys177–Lys249. Residues Glu164–Ser199 adopt a coiled-coil conformation. Low complexity predominate over residues Ser194 to Ser210. The segment covering Gly211–Gly248 has biased composition (polar residues). Residues Thr242 to Asn485 form the ABC transporter domain. Residue Gly274 to Ser281 participates in ATP binding. An ABC transmembrane type-2 domain is found at Thr562 to Leu810. A run of 7 helical transmembrane segments spans residues Leu568 to Ser588, Ile598 to Leu618, Ala647 to Leu667, Phe675 to Ile695, Phe706 to Val726, Ser732 to Ala752, and Gly788 to Ser808.

The protein belongs to the ABC transporter superfamily. ABCG family.

It is found in the membrane. This Dictyostelium discoideum (Social amoeba) protein is ABC transporter G family member 7 (abcG7).